The following is a 299-amino-acid chain: MKPDAHHVKQFLLRLQDDICQKLSAADGANFVEDSWRREAGGGGRSRVLRNGGIFEQAGVNFSHVHGDAMPASATAHRPELAGRSFEAMGVSLVVHPHNPYIPTSHANVRFFIAEKPGADPVWWFGGGFDLTPYYGFEEDAVHWHRTARDLCQPFGDDVYPRYKKWCDDYFFLKHRNEQRGVGGLFFDDLNTPDFDHCFAFMQAVGNGYTQAYLPIVERRKAMVWGERERNFQLYRRGRYVEFNLVWDRGTLFGLQTGGRTESILMSMPPLVRWEYDWQPEAGSPEAALSEFIQVRDWV.

Ser-92 is a binding site for substrate. The a divalent metal cation site is built by His-96 and His-106. His-106 (proton donor) is an active-site residue. 108-110 (NVR) serves as a coordination point for substrate. A divalent metal cation contacts are provided by His-145 and His-175. Residues 240–275 (YVEFNLVWDRGTLFGLQTGGRTESILMSMPPLVRWE) are important for dimerization. Substrate is bound at residue 258-260 (GGR).

Belongs to the aerobic coproporphyrinogen-III oxidase family. In terms of assembly, homodimer. Requires a divalent metal cation as cofactor.

The protein localises to the cytoplasm. It carries out the reaction coproporphyrinogen III + O2 + 2 H(+) = protoporphyrinogen IX + 2 CO2 + 2 H2O. The protein operates within porphyrin-containing compound metabolism; protoporphyrin-IX biosynthesis; protoporphyrinogen-IX from coproporphyrinogen-III (O2 route): step 1/1. Its function is as follows. Involved in the heme biosynthesis. Catalyzes the aerobic oxidative decarboxylation of propionate groups of rings A and B of coproporphyrinogen-III to yield the vinyl groups in protoporphyrinogen-IX. The chain is Oxygen-dependent coproporphyrinogen-III oxidase from Salmonella schwarzengrund (strain CVM19633).